Here is a 329-residue protein sequence, read N- to C-terminus: 4-hydroxythreonine-4-phosphate dehydrogenase (329 aa).

2 residues coordinate substrate: His136 and Thr137. His166, His211, and His266 together coordinate a divalent metal cation. Substrate-binding residues include Lys274, Asn283, and Arg292.

It belongs to the PdxA family. In terms of assembly, homodimer. The cofactor is Zn(2+). Mg(2+) serves as cofactor. Requires Co(2+) as cofactor.

The protein resides in the cytoplasm. The catalysed reaction is 4-(phosphooxy)-L-threonine + NAD(+) = 3-amino-2-oxopropyl phosphate + CO2 + NADH. It participates in cofactor biosynthesis; pyridoxine 5'-phosphate biosynthesis; pyridoxine 5'-phosphate from D-erythrose 4-phosphate: step 4/5. In terms of biological role, catalyzes the NAD(P)-dependent oxidation of 4-(phosphooxy)-L-threonine (HTP) into 2-amino-3-oxo-4-(phosphooxy)butyric acid which spontaneously decarboxylates to form 3-amino-2-oxopropyl phosphate (AHAP). This is 4-hydroxythreonine-4-phosphate dehydrogenase from Salmonella arizonae (strain ATCC BAA-731 / CDC346-86 / RSK2980).